The chain runs to 45 residues: Large ribosomal subunit protein bL34 (45 aa).

The protein belongs to the bacterial ribosomal protein bL34 family.

In Beutenbergia cavernae (strain ATCC BAA-8 / DSM 12333 / CCUG 43141 / JCM 11478 / NBRC 16432 / NCIMB 13614 / HKI 0122), this protein is Large ribosomal subunit protein bL34.